Consider the following 320-residue polypeptide: Quinolinate synthase (320 aa).

Iminosuccinate-binding residues include His-34 and Ser-51. Residue Cys-96 coordinates [4Fe-4S] cluster. Iminosuccinate is bound by residues 122–124 and Ser-139; that span reads YIN. [4Fe-4S] cluster is bound at residue Cys-182. Residues 208 to 210 and Thr-225 each bind iminosuccinate; that span reads HPE. Cys-276 serves as a coordination point for [4Fe-4S] cluster.

It belongs to the quinolinate synthase family. Type 2 subfamily. The cofactor is [4Fe-4S] cluster.

The protein localises to the cytoplasm. It carries out the reaction iminosuccinate + dihydroxyacetone phosphate = quinolinate + phosphate + 2 H2O + H(+). It functions in the pathway cofactor biosynthesis; NAD(+) biosynthesis; quinolinate from iminoaspartate: step 1/1. In terms of biological role, catalyzes the condensation of iminoaspartate with dihydroxyacetone phosphate to form quinolinate. The chain is Quinolinate synthase from Synechococcus sp. (strain ATCC 27144 / PCC 6301 / SAUG 1402/1) (Anacystis nidulans).